Here is a 317-residue protein sequence, read N- to C-terminus: Phosphopantothenate--cysteine ligase 1 (317 aa).

This sequence belongs to the PPC synthetase family. As to quaternary structure, homodimer.

It carries out the reaction (R)-4'-phosphopantothenate + L-cysteine + ATP = N-[(R)-4-phosphopantothenoyl]-L-cysteine + AMP + diphosphate + H(+). It participates in cofactor biosynthesis; coenzyme A biosynthesis; CoA from (R)-pantothenate: step 2/5. Catalyzes the first step in the biosynthesis of coenzyme A from vitamin B5/pantothenate, where cysteine is conjugated to 4'-phosphopantothenate to form 4-phosphopantothenoylcysteine. The catalytic activity is not CTP- but ATP-dependent. This is Phosphopantothenate--cysteine ligase 1 (PPCS1) from Arabidopsis thaliana (Mouse-ear cress).